The following is a 333-amino-acid chain: Holliday junction branch migration complex subunit RuvB (333 aa).

A large ATPase domain (RuvB-L) region spans residues 1 to 182 (MDERLLSQSH…FGVTLKLEYY (182 aa)). ATP is bound by residues L21, R22, G63, K66, T67, T68, 129 to 131 (EDY), R172, Y182, and R219. T67 contributes to the Mg(2+) binding site. Residues 183–253 (ETHELAAIVS…LASDALDRLH (71 aa)) are small ATPAse domain (RuvB-S). A head domain (RuvB-H) region spans residues 256 to 333 (ALGLDEVDHR…SHFGYEEEEE (78 aa)). R311 and R316 together coordinate DNA.

It belongs to the RuvB family. As to quaternary structure, homohexamer. Forms an RuvA(8)-RuvB(12)-Holliday junction (HJ) complex. HJ DNA is sandwiched between 2 RuvA tetramers; dsDNA enters through RuvA and exits via RuvB. An RuvB hexamer assembles on each DNA strand where it exits the tetramer. Each RuvB hexamer is contacted by two RuvA subunits (via domain III) on 2 adjacent RuvB subunits; this complex drives branch migration. In the full resolvosome a probable DNA-RuvA(4)-RuvB(12)-RuvC(2) complex forms which resolves the HJ.

It is found in the cytoplasm. It catalyses the reaction ATP + H2O = ADP + phosphate + H(+). Its function is as follows. The RuvA-RuvB-RuvC complex processes Holliday junction (HJ) DNA during genetic recombination and DNA repair, while the RuvA-RuvB complex plays an important role in the rescue of blocked DNA replication forks via replication fork reversal (RFR). RuvA specifically binds to HJ cruciform DNA, conferring on it an open structure. The RuvB hexamer acts as an ATP-dependent pump, pulling dsDNA into and through the RuvAB complex. RuvB forms 2 homohexamers on either side of HJ DNA bound by 1 or 2 RuvA tetramers; 4 subunits per hexamer contact DNA at a time. Coordinated motions by a converter formed by DNA-disengaged RuvB subunits stimulates ATP hydrolysis and nucleotide exchange. Immobilization of the converter enables RuvB to convert the ATP-contained energy into a lever motion, pulling 2 nucleotides of DNA out of the RuvA tetramer per ATP hydrolyzed, thus driving DNA branch migration. The RuvB motors rotate together with the DNA substrate, which together with the progressing nucleotide cycle form the mechanistic basis for DNA recombination by continuous HJ branch migration. Branch migration allows RuvC to scan DNA until it finds its consensus sequence, where it cleaves and resolves cruciform DNA. This is Holliday junction branch migration complex subunit RuvB from Exiguobacterium sp. (strain ATCC BAA-1283 / AT1b).